We begin with the raw amino-acid sequence, 282 residues long: NADPH-dependent 7-cyano-7-deazaguanine reductase (282 aa).

88–90 (IES) lines the substrate pocket. 90–91 (SK) lines the NADPH pocket. The active-site Thioimide intermediate is the Cys-190. The active-site Proton donor is the Asp-197. Position 229–230 (229–230 (HE)) interacts with substrate. 258 to 259 (RG) is an NADPH binding site.

The protein belongs to the GTP cyclohydrolase I family. QueF type 2 subfamily. As to quaternary structure, homodimer.

It is found in the cytoplasm. The catalysed reaction is 7-aminomethyl-7-carbaguanine + 2 NADP(+) = 7-cyano-7-deazaguanine + 2 NADPH + 3 H(+). The protein operates within tRNA modification; tRNA-queuosine biosynthesis. In terms of biological role, catalyzes the NADPH-dependent reduction of 7-cyano-7-deazaguanine (preQ0) to 7-aminomethyl-7-deazaguanine (preQ1). This chain is NADPH-dependent 7-cyano-7-deazaguanine reductase, found in Escherichia coli O45:K1 (strain S88 / ExPEC).